The chain runs to 1136 residues: Type I inositol polyphosphate 5-phosphatase 13 (1136 aa).

5 WD repeats span residues 147 to 185 (ETQT…EAGC), 205 to 244 (VTTS…VSHD), 259 to 297 (AHRG…KSLL), 436 to 475 (EDTR…RDVN), and 515 to 552 (SHNE…PLDN). 2 catalytic regions span residues 782-798 (DMVA…FGIT) and 861-876 (KKRI…YRDT). Lysine 940 is covalently cross-linked (Glycyl lysine isopeptide (Lys-Gly) (interchain with G-Cter in ubiquitin)). Residues 1104–1136 (KNLGGSRRYPTDITRNGSTRPRTEDSVRRGKSR) are disordered. Over residues 1124–1136 (PRTEDSVRRGKSR) the composition is skewed to basic and acidic residues.

It belongs to the inositol polyphosphate 5-phosphatase family. Interacts with KIN10, but not with PHOT1. It depends on Mg(2+) as a cofactor. Expressed in young seedlings and flowers. Highly expressed in anther and pollen grains, but not in pistils. Not detected in maturated roots, stems and rosette leaves.

It is found in the nucleus. The catalysed reaction is 1D-myo-inositol 1,4,5-trisphosphate + H2O = 1D-myo-inositol 1,4-bisphosphate + phosphate. Converts inositol 1,4,5-trisphosphate (Ins(1,4,5)P3) to inositol 1,4-bisphosphate. Modulates cotyledon vein development through regulating auxin homeostasis. Involved in blue light responses. Decreases the amount of KIN10 degraded by the proteasome under low nutrient conditions. Participates with IP5P12 in the control of Ins(1,4,5)P3/Ca(2+) levels that is crucial for maintaining pollen dormancy and regulating early germination of pollen. May modulate auxin transport by regulating vesicle trafficking and thereby plays a role in root gravitropism. The chain is Type I inositol polyphosphate 5-phosphatase 13 from Arabidopsis thaliana (Mouse-ear cress).